A 229-amino-acid chain; its full sequence is ATP-dependent dethiobiotin synthetase BioD (229 aa).

Glutamate 15–leucine 20 is a binding site for ATP. Residue threonine 19 participates in Mg(2+) binding. Residue lysine 40 is part of the active site. ATP is bound by residues aspartate 57, glutamate 118–glycine 121, and proline 207–leucine 209. Aspartate 57 and glutamate 118 together coordinate Mg(2+).

This sequence belongs to the dethiobiotin synthetase family. In terms of assembly, homodimer. The cofactor is Mg(2+).

The protein resides in the cytoplasm. The enzyme catalyses (7R,8S)-7,8-diammoniononanoate + CO2 + ATP = (4R,5S)-dethiobiotin + ADP + phosphate + 3 H(+). It functions in the pathway cofactor biosynthesis; biotin biosynthesis; biotin from 7,8-diaminononanoate: step 1/2. In terms of biological role, catalyzes a mechanistically unusual reaction, the ATP-dependent insertion of CO2 between the N7 and N8 nitrogen atoms of 7,8-diaminopelargonic acid (DAPA, also called 7,8-diammoniononanoate) to form a ureido ring. In Ralstonia nicotianae (strain ATCC BAA-1114 / GMI1000) (Ralstonia solanacearum), this protein is ATP-dependent dethiobiotin synthetase BioD.